The chain runs to 4007 residues: PKS-NRPS hybrid synthetase psoA (4007 aa).

A Ketosynthase family 3 (KS3) domain is found at 8-444 (KEPIAIIGTG…GTNCHAIVES (437 aa)). Catalysis depends on for beta-ketoacyl synthase activity residues Cys182, His321, and His364. Residues 575 to 897 (VFTGQGAQWA…VLDRKADDIL (323 aa)) are malonyl-CoA:ACP transacylase (MAT) domain. The interval 969 to 1105 (HPLLGSRTPD…GHIRITLAAE (137 aa)) is N-terminal hotdog fold. The tract at residues 969–1147 (HPLLGSRTPD…LSYSGPFRAM (179 aa)) is dehydratase (DH) domain. The 308-residue stretch at 969-1276 (HPLLGSRTPD…MSSFLPASEK (308 aa)) folds into the PKS/mFAS DH domain. His1001 serves as the catalytic Proton acceptor; for dehydratase activity. Positions 1120-1276 (DLLPTSVDRF…MSSFLPASEK (157 aa)) are C-terminal hotdog fold. Asp1179 acts as the Proton donor; for dehydratase activity in catalysis. Positions 2131-2305 (TYLLVGLTGH…PASVIDIGMV (175 aa)) are ketoreductase (KR) domain. Residues 2418–2495 (EARKVMENAL…QICDEVVASL (78 aa)) enclose the Carrier 1 domain. At Ser2455 the chain carries O-(pantetheine 4'-phosphoryl)serine. Positions 2513–2550 (PAHKLRPWDKPSADTKRTDSIAPVPRSQIAANGPNGLP) are disordered. A compositionally biased stretch (basic and acidic residues) spans 2518 to 2531 (RPWDKPSADTKRTD). Residues 2589–2885 (QPLSLGQSRL…LETIPLWFKV (297 aa)) are condensation (C) domain. The adenylation (A) domain stretch occupies residues 3076–3478 (TYVQLAERAN…LGDVARALVQ (403 aa)). A Carrier 2 domain is found at 3576–3652 (TPTEARLRDV…LLAARLDGTS (77 aa)). O-(pantetheine 4'-phosphoryl)serine is present on Ser3612. The segment at 3696–3920 (LTGATGFLGG…INVETVSNNI (225 aa)) is reductase (R) domain.

It in the C-terminal section; belongs to the NRP synthetase family.

It functions in the pathway secondary metabolite biosynthesis. In terms of biological role, PKS-NRPS hybrid synthetase; part of the gene cluster that mediates the biosynthesis of pseurotin A, a competitive inhibitor of chitin synthase and an inducer of nerve-cell proliferation. The PKS-NRPS hybrid synthetase psoA is responsible for the biosynthesis of azaspirene, one of the first intermediates having the 1-oxa-7-azaspiro[4,4]-non-2-ene-4,6-dione core of pseurotin, via condensation of one acetyl-CoA, 4 malonyl-CoA, and a L-phenylalanine molecule. The dual-functional monooxygenase/methyltransferase psoF seems to be involved in the addition of the C3 methyl group onto the pseurotin scaffold. Azaspirene is then converted to synerazol through 4 steps including oxidation of C17 by the cytochrome P450 monooxygenase psoD, O-methylation of the hydroxy group of C8 by the methyltransferase psoC, and the trans-to-cis isomerization of the C13 olefin by the glutathione S-transferase psoE. The fourth step of synerazol production is performed by the dual-functional monooxygenase/methyltransferase psoF which seems to catalyze the epoxidation of the intermediate deepoxy-synerazol. Synerazol can be attacked by a water molecule nonenzymatically at two different positions to yield two diol products, pseurotin A and pseurotin D. This is PKS-NRPS hybrid synthetase psoA from Aspergillus fumigatus (strain ATCC MYA-4609 / CBS 101355 / FGSC A1100 / Af293) (Neosartorya fumigata).